We begin with the raw amino-acid sequence, 50 residues long: Large ribosomal subunit protein bL32c (50 aa).

It belongs to the bacterial ribosomal protein bL32 family.

It is found in the plastid. It localises to the chloroplast. The polypeptide is Large ribosomal subunit protein bL32c (Lotus japonicus (Lotus corniculatus var. japonicus)).